Here is a 641-residue protein sequence, read N- to C-terminus: 1-deoxy-D-xylulose-5-phosphate synthase (641 aa).

Residues His-79 and 120–122 (AHS) each bind thiamine diphosphate. Position 151 (Asp-151) interacts with Mg(2+). Residues 152-153 (GS), Asn-180, Tyr-290, and Glu-372 each bind thiamine diphosphate. Residue Asn-180 coordinates Mg(2+).

This sequence belongs to the transketolase family. DXPS subfamily. As to quaternary structure, homodimer. It depends on Mg(2+) as a cofactor. Thiamine diphosphate serves as cofactor.

It catalyses the reaction D-glyceraldehyde 3-phosphate + pyruvate + H(+) = 1-deoxy-D-xylulose 5-phosphate + CO2. It participates in metabolic intermediate biosynthesis; 1-deoxy-D-xylulose 5-phosphate biosynthesis; 1-deoxy-D-xylulose 5-phosphate from D-glyceraldehyde 3-phosphate and pyruvate: step 1/1. In terms of biological role, catalyzes the acyloin condensation reaction between C atoms 2 and 3 of pyruvate and glyceraldehyde 3-phosphate to yield 1-deoxy-D-xylulose-5-phosphate (DXP). The sequence is that of 1-deoxy-D-xylulose-5-phosphate synthase from Rhodopseudomonas palustris (strain BisB18).